The chain runs to 357 residues: Isopentenyl-diphosphate delta-isomerase (357 aa).

Residue 6–7 (RK) participates in substrate binding. Residues Ser62, 63–65 (AMT), Ser93, and Asn122 contribute to the FMN site. Residue 93–95 (SQR) coordinates substrate. Gln156 contacts substrate. Mg(2+) is bound at residue Glu157. FMN contacts are provided by residues Lys186, Thr216, 267–269 (GVR), and 288–289 (AL).

Belongs to the IPP isomerase type 2 family. Homooctamer. Dimer of tetramers. FMN is required as a cofactor. The cofactor is NADPH. Requires Mg(2+) as cofactor.

It localises to the cytoplasm. The enzyme catalyses isopentenyl diphosphate = dimethylallyl diphosphate. Functionally, involved in the biosynthesis of isoprenoids. Catalyzes the 1,3-allylic rearrangement of the homoallylic substrate isopentenyl (IPP) to its allylic isomer, dimethylallyl diphosphate (DMAPP). This chain is Isopentenyl-diphosphate delta-isomerase, found in Methanothrix thermoacetophila (strain DSM 6194 / JCM 14653 / NBRC 101360 / PT) (Methanosaeta thermophila).